Reading from the N-terminus, the 1529-residue chain is DNA (cytosine-5)-methyltransferase 1B (1529 aa).

Disordered stretches follow at residues 1 to 56 (MVKS…RAAC) and 674 to 706 (DDELEENEDEDAEEEAQIEEENVSKTPPSTRSR). Residues 21-35 (QKKDEDTTDKGKLDE) are compositionally biased toward basic and acidic residues. Acidic residues predominate over residues 674-694 (DDELEENEDEDAEEEAQIEEE). The span at 697 to 706 (SKTPPSTRSR) shows a compositional bias: polar residues. BAH domains are found at residues 741-873 (LRIN…FSLP) and 910-1049 (ITYN…KQLP). The SAM-dependent MTase C5-type domain maps to 1093–1527 (LATLDIFAGC…RKLKEAVDAK (435 aa)). Cysteine 1198 is a catalytic residue.

The protein belongs to the class I-like SAM-binding methyltransferase superfamily. C5-methyltransferase family. As to expression, expressed in roots and inflorescences. Expressed in roots, panicles, anthers, pistils, endosperm and imbibed embryos. Expressed in tissues containing actively replicating and dividing cells, such as shoot and root meristems.

The protein localises to the nucleus. The enzyme catalyses a 2'-deoxycytidine in DNA + S-adenosyl-L-methionine = a 5-methyl-2'-deoxycytidine in DNA + S-adenosyl-L-homocysteine + H(+). Major CG methylase that methylates chromatin CpG residues and maintains DNA methylation. Plays a major role in genomic imprinting, regulation of embryogenesis and seed viability. Maintains DNA methylation at the FIE1 gene locus in the embryo. The sequence is that of DNA (cytosine-5)-methyltransferase 1B (MET1B) from Oryza sativa subsp. japonica (Rice).